The sequence spans 1076 residues: MASQDSDEALPANYKDYPDGSLLRVVFHNFLTYEHTSFLPTASLNMILGHNGSGKSSIICGICLACGGSPKSLGRSERIVEYIRHGCTEGYVEIAIADKQKGPQVVRLTIRVGEQPKYRLNDSATTQSEIADLRKHYNIQIDNPCAFLAQDKVKSFSEQSSIELLRNTEKAASADLDQQHIDLMKQREDSTSIEDKCTTSENAIKRLEDEIGKIMPLVENYRKKLALQSKLRLLEKKMKIMEFEKFDREYKAELQNMDGAMIEYREVEKSIAECEKHRKNLEDRIKKDRSQISQMQRSCNEILAKVQEKGDKKLMEDMMQRAKAKLESAKKAADQHEKDVEKARKMIDQARARLQEAVDTLNGYEEFQSEMKSLEQKYSTAERDSRQEEDAIQKKSYEMRQLENKKRDEEQNSQLNRQDRYRVLQNFSSDASKAYRWYQQNRSQFKGDVYMPIMDMVLKTPEAAKALENSVGVRDRTMFVCCYKEDELLINGKQHSWRINTSVVPAEKIYSEDIDAQLPSELSRLGFKYLVSNCFDAPAPLKQFLCNVSGLNRIPFGGSDVEKKIAEVSQAIEQTRYSVFLTANIRCQNSKSRYANNTLQSQSATREANTWRDQFFKVSPVAKRTDNSILEEIQKLKAEIDIRSEQLREKRGAIQKERDVLRQEQMQWKSKKQVHTKWKTELASEMAKLEALENEVVDISAIEEEYANVEKKAILETKKMLENSIRWHKEIIDKHRLIGIFELSESICKSRVNKSNSEAETHRSKLEDLKSVKDAAEDLLKTALNHKKAAASALMKECSLKTLDESKMSPAENKIYSSLVKMFEEADVPTDMNTLDQAITSEKTRLKLAEDSGEDGSIVHEQRLKVLDDDLVLEKTRQEKLIENRARIHDKLGDEINNWRKEVETMIEQINVNYVQFFDSLGCRGEVSLEVPENPLDIEKYGIMIMVCFRKGESMKRLDNKVQSGGERSVATMLYLLALQQLCPVPFRCIDEINQGMDPTNERKVFDIMVGMWNGTTGTLSKTQYFLLSPKLLHGLDMRENVNIVMVNSTLTNSHGKHYDTSAKIDATFAKMGISA.

An ATP-binding site is contributed by Gly49 to Ser56. The stretch at Ser190–Leu415 forms a coiled coil. Over residues Glu375–Glu410 the composition is skewed to basic and acidic residues. The disordered stretch occupies residues Glu375–Arg420. Residues Asn416–Lys617 form a flexible hinge region. Coiled coils occupy residues Asn627 to Ala713 and Lys749 to His786.

It belongs to the SMC family. SMC5 subfamily. In terms of assembly, interacts with smc-6. In terms of tissue distribution, expressed in the germline (at protein level).

It localises to the nucleus. The protein resides in the chromosome. Its function is as follows. Core component of the smc-5/smc-6 complex. Functions in DNA double strand break repair by promoting sister-chromatid homologous recombination during meiosis. Acts in a DNA repair pathway for removal of ionizing radiation- and ultraviolet (UV) radiation-induced DNA lesions that is distinct from classical nucleotide excision repair and the translesion synthesis pathway. Also involved in the recovery of stalled replication forks. The protein is Structural maintenance of chromosomes protein 5 of Caenorhabditis elegans.